Consider the following 153-residue polypeptide: Ribonuclease H (153 aa).

In terms of domain architecture, RNase H type-1 spans 1–142 (MTDQIEIFTD…ADELARRGVD (142 aa)). Mg(2+) is bound by residues aspartate 10, glutamate 48, aspartate 70, and aspartate 134.

This sequence belongs to the RNase H family. In terms of assembly, monomer. Mg(2+) is required as a cofactor.

It is found in the cytoplasm. It catalyses the reaction Endonucleolytic cleavage to 5'-phosphomonoester.. In terms of biological role, endonuclease that specifically degrades the RNA of RNA-DNA hybrids. This is Ribonuclease H from Aromatoleum aromaticum (strain DSM 19018 / LMG 30748 / EbN1) (Azoarcus sp. (strain EbN1)).